We begin with the raw amino-acid sequence, 449 residues long: Probable D-serine dehydratase (449 aa).

At Lys119 the chain carries N6-(pyridoxal phosphate)lysine.

Belongs to the serine/threonine dehydratase family. DsdA subfamily. Pyridoxal 5'-phosphate is required as a cofactor.

It catalyses the reaction D-serine = pyruvate + NH4(+). The protein is Probable D-serine dehydratase of Pseudomonas putida (strain ATCC 700007 / DSM 6899 / JCM 31910 / BCRC 17059 / LMG 24140 / F1).